A 238-amino-acid chain; its full sequence is C-type lectin domain family 4 member A (238 aa).

Residues 1-48 (MASEITYAEVKFKNESNSLHTYSESPAAPREKPIRDLRKPGSPSLLLT) are Cytoplasmic-facing. The ITIM motif signature appears at 5-10 (ITYAEV). Residues 49-69 (SLMLLLLLLAITFLVAFIIYF) traverse the membrane as a helical; Signal-anchor for type II membrane protein segment. Over 70-238 (QKYSQLLEEK…SVCQMKKINL (169 aa)) the chain is Extracellular. The N-linked (GlcNAc...) asparagine glycan is linked to asparagine 91. The cysteines at positions 107 and 118 are disulfide-linked. One can recognise a C-type lectin domain in the interval 126-233 (SSASWNKSEE…SLKQKSVCQM (108 aa)). Asparagine 131 and asparagine 136 each carry an N-linked (GlcNAc...) asparagine glycan. Cystine bridges form between cysteine 137–cysteine 231 and cysteine 205–cysteine 223. Positions 146, 152, 197, 199, and 203 each coordinate Ca(2+). Residues 197 to 199 (EPS) and glutamate 203 each bind alpha-D-mannopyranose. Residue 209-211 (IYR) coordinates N-acetyl-D-glucosamine. The Ca(2+) site is built by asparagine 219 and aspartate 220.

In terms of assembly, may interact with PTPN6 via its ITIM site. In terms of tissue distribution, expressed in splenic antigen-presenting cells including B-cells, monocytes/macrophages, and dendritic cells (at protein level). Expressed in spleen and lymph node and slightly increased with dendritic cell maturation.

The protein localises to the cell membrane. Its function is as follows. May be involved in regulating immune reactivity. May play a role in modulating dendritic cells (DC) differentiation and/or maturation. May be involved in the inhibition of B-cell-receptor-mediated calcium mobilization and protein tyrosine phosphorylation. In terms of biological role, C-type lectin receptor that binds carbohydrates mannose and fucose but also weakly interacts with N-acetylglucosamine (GlcNAc) in a Ca(2+)-dependent manner. Involved in regulating immune reactivity. Once triggered by antigen, it is internalized by clathrin-dependent endocytosis and delivers its antigenic cargo into the antigen presentation pathway resulting in cross-priming of CD8(+) T cells. This cross-presentation and cross-priming are enhanced by TLR7 and TLR8 agonists with increased expansion of the CD8(+) T cells, high production of IFNG and TNF with reduced levels of IL4, IL5 and IL13. In plasmacytoid dendritic cells, inhibits TLR9-mediated IFNA and TNF production. May be involved via its ITIM motif (immunoreceptor tyrosine-based inhibitory motifs) in the inhibition of B-cell-receptor-mediated calcium mobilization and protein tyrosine phosphorylation. This is C-type lectin domain family 4 member A (Clec4a) from Mus musculus (Mouse).